The chain runs to 113 residues: Beta-defensin 112 (113 aa).

Intrachain disulfides connect Cys-54-Cys-82, Cys-61-Cys-75, and Cys-65-Cys-83.

Belongs to the beta-defensin family.

The protein localises to the secreted. Has antibacterial activity. This Homo sapiens (Human) protein is Beta-defensin 112 (DEFB112).